The chain runs to 495 residues: Telomere-binding protein subunit alpha (495 aa).

The segment covering 1-13 (MSTAAKQNRSTSR) has biased composition (polar residues). Positions 1–31 (MSTAAKQNRSTSRVSKKKTAAPKEGAAKKSD) are disordered.

It belongs to the telombin family. Heterodimer of an alpha and a beta subunit.

The protein localises to the nucleus. It is found in the chromosome. Its subcellular location is the telomere. Its function is as follows. May function as protective capping of the single-stranded telomeric overhang. May also participate in telomere length regulation during DNA replication. Binds specifically to the T4G4-containing extension on the 3'strand and protects this region of the telomere from nuclease digestion and chemical modification. This Sterkiella nova (Ciliate) protein is Telomere-binding protein subunit alpha (MAC-56A).